The sequence spans 1483 residues: ABC multidrug transporter atrA (1483 aa).

Basic and acidic residues predominate over residues 1–19; that stretch reads MASHKKSEDPLVVKDRQEQ. A disordered region spans residues 1 to 92; that stretch reads MASHKKSEDP…NDPAVDPQGP (92 aa). A glycan (N-linked (GlcNAc...) asparagine) is linked at Asn32. The segment covering 71-82 has biased composition (polar residues); the sequence is PTRTSTLATISE. N-linked (GlcNAc...) asparagine glycosylation is found at Asn123 and Asn322. The 252-residue stretch at 147–398 folds into the ABC transporter 1 domain; sequence FRIGEMMKNR…FERQGWECPQ (252 aa). 5 helical membrane-spanning segments follow: residues 512 to 532, 539 to 559, 595 to 615, 620 to 640, and 654 to 674; these read TVSTVISQIIMALIIGSVFYG, GFTAKGATLFFAVLLNALIAM, IPVKFVIAVVFNLILYFLAGL, GQFFLYLLVTFIVMFVMSAVF, and MGLAGILILALIVYTGFVLPV. Asn718 carries an N-linked (GlcNAc...) asparagine glycan. A helical transmembrane segment spans residues 759-779; it reads FGILIAFLVGFMMIYFIATEL. N-linked (GlcNAc...) asparagine glycosylation occurs at Asn780. The 244-residue stretch at 840-1083 folds into the ABC transporter 2 domain; the sequence is FTWRDVCYDI…LLNYFESNGA (244 aa). Residue 876 to 883 participates in ATP binding; that stretch reads GVSGAGKT. 2 N-linked (GlcNAc...) asparagine glycosylation sites follow: Asn947 and Asn1146. 5 helical membrane passes run 1179 to 1199, 1215 to 1235, 1254 to 1274, 1293 to 1313, and 1320 to 1340; these read YIASKWVLGILSGLFIGFSFF, LFMLCSIFSSLVQQVMPLFVT, AFLIANIIVEIPYQIMMGILT, LVLLLCIQFFIYASTFAHMAI, and ETASAIVVLLFAMSLTFCGVM. Asn1413 carries N-linked (GlcNAc...) asparagine glycosylation. Residues 1444-1464 traverse the membrane as a helical segment; the sequence is FGLMWVYIVFNIFLATMLYYT. Residue Asn1471 is glycosylated (N-linked (GlcNAc...) asparagine).

This sequence belongs to the ABC transporter superfamily. ABCG family. PDR (TC 3.A.1.205) subfamily.

The protein localises to the cell membrane. The catalysed reaction is (R)-miconazole(in) + ATP + H2O = (R)-miconazole(out) + ADP + phosphate + H(+). Pleiotropic ABC efflux transporter involved in the basal level of azole susceptibility. Confers resistance to miconazole and clotrimazole. The sequence is that of ABC multidrug transporter atrA from Aspergillus oryzae (strain ATCC 42149 / RIB 40) (Yellow koji mold).